A 120-amino-acid polypeptide reads, in one-letter code: UPF0102 protein HSM_1206 (120 aa).

Belongs to the UPF0102 family.

This Histophilus somni (strain 2336) (Haemophilus somnus) protein is UPF0102 protein HSM_1206.